We begin with the raw amino-acid sequence, 245 residues long: DNA repair protein RecO (245 aa).

This sequence belongs to the RecO family.

Functionally, involved in DNA repair and RecF pathway recombination. This Porphyromonas gingivalis (strain ATCC 33277 / DSM 20709 / CIP 103683 / JCM 12257 / NCTC 11834 / 2561) protein is DNA repair protein RecO.